A 492-amino-acid chain; its full sequence is N-succinylglutamate 5-semialdehyde dehydrogenase (492 aa).

220-225 contacts NAD(+); sequence GSASTG. Catalysis depends on residues E243 and C277.

This sequence belongs to the aldehyde dehydrogenase family. AstD subfamily.

The catalysed reaction is N-succinyl-L-glutamate 5-semialdehyde + NAD(+) + H2O = N-succinyl-L-glutamate + NADH + 2 H(+). It participates in amino-acid degradation; L-arginine degradation via AST pathway; L-glutamate and succinate from L-arginine: step 4/5. Its function is as follows. Catalyzes the NAD-dependent reduction of succinylglutamate semialdehyde into succinylglutamate. This is N-succinylglutamate 5-semialdehyde dehydrogenase from Salmonella paratyphi C (strain RKS4594).